The sequence spans 124 residues: Small ribosomal subunit protein uS12 (124 aa).

Residues 1-23 are disordered; that stretch reads MATINQLVRKPRRSKVTKSNSAA. Position 89 is a 3-methylthioaspartic acid (Asp-89).

Belongs to the universal ribosomal protein uS12 family. As to quaternary structure, part of the 30S ribosomal subunit. Contacts proteins S8 and S17. May interact with IF1 in the 30S initiation complex.

Its function is as follows. With S4 and S5 plays an important role in translational accuracy. In terms of biological role, interacts with and stabilizes bases of the 16S rRNA that are involved in tRNA selection in the A site and with the mRNA backbone. Located at the interface of the 30S and 50S subunits, it traverses the body of the 30S subunit contacting proteins on the other side and probably holding the rRNA structure together. The combined cluster of proteins S8, S12 and S17 appears to hold together the shoulder and platform of the 30S subunit. This Pseudoalteromonas translucida (strain TAC 125) protein is Small ribosomal subunit protein uS12.